Consider the following 275-residue polypeptide: MHAVQRQIAEQLKVQPPFADQNALQAEVARRVNFIKECLQNARLKTLVLGISGGVDSLTAGLLAQRAVKELRESTGDNAYRFIAVRLPYVVQADEHEAQASVDFIEPDERHTINIGSSVKALAAEVKAFDGLPATSVDFVLGNTKARMRMVAQYTVAGAYHGLVIGTDHAAEAVMGFFTKFGDGACDLAPLSGLVKNQVRAIARHFGAPESLVEKVPTADLEDLSPGKPDEASHGVTYAEIDAFLHGEPVREEAFRIICETYAKTQHKRELPYAP.

50–57 is a binding site for ATP; sequence GISGGVDS. Mg(2+) is bound at residue D56. R147 contacts deamido-NAD(+). T167 lines the ATP pocket. Position 172 (E172) interacts with Mg(2+). 2 residues coordinate deamido-NAD(+): K180 and D187. ATP contacts are provided by K196 and T218. 267-268 is a binding site for deamido-NAD(+); the sequence is HK.

Belongs to the NAD synthetase family. In terms of assembly, homodimer.

The enzyme catalyses deamido-NAD(+) + NH4(+) + ATP = AMP + diphosphate + NAD(+) + H(+). It participates in cofactor biosynthesis; NAD(+) biosynthesis; NAD(+) from deamido-NAD(+) (ammonia route): step 1/1. Its function is as follows. Catalyzes the ATP-dependent amidation of deamido-NAD to form NAD. Uses ammonia as a nitrogen source. The chain is NH(3)-dependent NAD(+) synthetase from Pseudomonas syringae pv. syringae (strain B728a).